The sequence spans 141 residues: Large ribosomal subunit protein uL11 (141 aa).

It belongs to the universal ribosomal protein uL11 family. In terms of assembly, part of the ribosomal stalk of the 50S ribosomal subunit. Interacts with L10 and the large rRNA to form the base of the stalk. L10 forms an elongated spine to which L12 dimers bind in a sequential fashion forming a multimeric L10(L12)X complex. In terms of processing, one or more lysine residues are methylated.

Forms part of the ribosomal stalk which helps the ribosome interact with GTP-bound translation factors. This Pelodictyon phaeoclathratiforme (strain DSM 5477 / BU-1) protein is Large ribosomal subunit protein uL11.